The sequence spans 252 residues: Eukaryotic translation initiation factor 3 subunit J (252 aa).

Disordered regions lie at residues 24-107 (VPAG…TPEE) and 209-232 (KQSKAKKKKKGVVPGGGLKATMKD). A compositionally biased stretch (acidic residues) spans 36–56 (EDEEDDVKDNWDDEEEEEEVK). Residues 57–107 (EAEVKQEPKVSEKKKIAEKIKEKEKQQKKKQEELKKRLEAPEEHKELTPEE) are compositionally biased toward basic and acidic residues. Residues 65–130 (KVSEKKKIAE…ESDLELAKET (66 aa)) are a coiled coil.

The protein belongs to the eIF-3 subunit J family. In terms of assembly, component of the eukaryotic translation initiation factor 3 (eIF-3) complex, which is composed of 13 subunits: EIF3A, EIF3B, EIF3C, EIF3D, EIF3E, EIF3F, EIF3G, EIF3H, EIF3I, EIF3J, EIF3K, EIF3L and EIF3M.

It localises to the cytoplasm. Functionally, component of the eukaryotic translation initiation factor 3 (eIF-3) complex, which is involved in protein synthesis of a specialized repertoire of mRNAs and, together with other initiation factors, stimulates binding of mRNA and methionyl-tRNAi to the 40S ribosome. The eIF-3 complex specifically targets and initiates translation of a subset of mRNAs involved in cell proliferation. This is Eukaryotic translation initiation factor 3 subunit J from Gallus gallus (Chicken).